We begin with the raw amino-acid sequence, 423 residues long: 3-phosphoshikimate 1-carboxyvinyltransferase (423 aa).

3-phosphoshikimate-binding residues include Lys20, Ser21, and Arg25. Lys20 serves as a coordination point for phosphoenolpyruvate. Residues Gly91 and Arg119 each coordinate phosphoenolpyruvate. 3-phosphoshikimate is bound by residues Thr163, Ser164, Gln165, Asp305, Gln328, and Lys332. Residue Gln165 coordinates phosphoenolpyruvate. The Proton acceptor role is filled by Asp305. Positions 336 and 377 each coordinate phosphoenolpyruvate.

Belongs to the EPSP synthase family. As to quaternary structure, monomer.

It localises to the cytoplasm. It catalyses the reaction 3-phosphoshikimate + phosphoenolpyruvate = 5-O-(1-carboxyvinyl)-3-phosphoshikimate + phosphate. The protein operates within metabolic intermediate biosynthesis; chorismate biosynthesis; chorismate from D-erythrose 4-phosphate and phosphoenolpyruvate: step 6/7. Catalyzes the transfer of the enolpyruvyl moiety of phosphoenolpyruvate (PEP) to the 5-hydroxyl of shikimate-3-phosphate (S3P) to produce enolpyruvyl shikimate-3-phosphate and inorganic phosphate. In Acetivibrio thermocellus (strain ATCC 27405 / DSM 1237 / JCM 9322 / NBRC 103400 / NCIMB 10682 / NRRL B-4536 / VPI 7372) (Clostridium thermocellum), this protein is 3-phosphoshikimate 1-carboxyvinyltransferase.